We begin with the raw amino-acid sequence, 486 residues long: NADH dehydrogenase [ubiquinone] flavoprotein 1, mitochondrial (486 aa).

A mitochondrion-targeting transit peptide spans 1–30; it reads MAPVRGILGLQRAVSIWKESNRLTPALRSF. The span at 31–40 shows a compositional bias: low complexity; sequence STQAASTSTT. Residues 31–57 form a disordered region; sequence STQAASTSTTPQPPPPPPPPEKTHFGG. Residues 41–50 show a composition bias toward pro residues; it reads PQPPPPPPPP. 110–119 contributes to the NADH binding site; sequence GRGGAGFPSG. Position 222–270 (222–270) interacts with FMN; the sequence is FGAGAYICGEETALLESLEGKQGKPRLKPPFPANAGLYGCPTTVTNVET. Residues Cys-402, Cys-405, Cys-408, and Cys-448 each coordinate [4Fe-4S] cluster.

This sequence belongs to the complex I 51 kDa subunit family. In terms of assembly, complex I is composed of at least 49 different subunits. This is a component of the flavoprotein-sulfur (FP) fragment of the enzyme. The cofactor is FMN. [4Fe-4S] cluster is required as a cofactor.

Its subcellular location is the mitochondrion inner membrane. It carries out the reaction a ubiquinone + NADH + 5 H(+)(in) = a ubiquinol + NAD(+) + 4 H(+)(out). In terms of biological role, core subunit of the mitochondrial membrane respiratory chain NADH dehydrogenase (Complex I) that is believed to belong to the minimal assembly required for catalysis. Complex I functions in the transfer of electrons from NADH to the respiratory chain. The immediate electron acceptor for the enzyme is believed to be ubiquinone. In Arabidopsis thaliana (Mouse-ear cress), this protein is NADH dehydrogenase [ubiquinone] flavoprotein 1, mitochondrial.